Reading from the N-terminus, the 486-residue chain is Cardiolipin synthase A (486 aa).

Transmembrane regions (helical) follow at residues 3-23 and 38-58; these read TFYT…IAGV and MAWL…YLSF. 2 consecutive PLD phosphodiesterase domains span residues 219 to 246 and 399 to 426; these read MDLR…VDPR and EGGL…DMRS. Residues H224, K226, D231, H404, K406, and D411 contribute to the active site.

It belongs to the phospholipase D family. Cardiolipin synthase subfamily. ClsA sub-subfamily.

The protein localises to the cell inner membrane. The enzyme catalyses 2 a 1,2-diacyl-sn-glycero-3-phospho-(1'-sn-glycerol) = a cardiolipin + glycerol. Catalyzes the reversible phosphatidyl group transfer from one phosphatidylglycerol molecule to another to form cardiolipin (CL) (diphosphatidylglycerol) and glycerol. The polypeptide is Cardiolipin synthase A (Klebsiella pneumoniae subsp. pneumoniae (strain ATCC 700721 / MGH 78578)).